The following is a 269-amino-acid chain: Malonyl-[acyl-carrier protein] O-methyltransferase (269 aa).

Belongs to the methyltransferase superfamily.

The catalysed reaction is malonyl-[ACP] + S-adenosyl-L-methionine = malonyl-[ACP] methyl ester + S-adenosyl-L-homocysteine. Its pathway is cofactor biosynthesis; biotin biosynthesis. Functionally, converts the free carboxyl group of a malonyl-thioester to its methyl ester by transfer of a methyl group from S-adenosyl-L-methionine (SAM). It allows to synthesize pimeloyl-ACP via the fatty acid synthetic pathway. The protein is Malonyl-[acyl-carrier protein] O-methyltransferase of Bacillus anthracis.